Reading from the N-terminus, the 720-residue chain is DNA helicase II (720 aa).

The UvrD-like helicase ATP-binding domain occupies 8–286 (DSLNDKQREA…IRLEQNYRST (279 aa)). Residues 32–37 (GSGKTR) and Arg-284 each bind ATP. The 278-residue stretch at 287–564 (SNILSAANAL…QLMTLHSAKG (278 aa)) folds into the UvrD-like helicase C-terminal domain.

It belongs to the helicase family. UvrD subfamily.

It catalyses the reaction Couples ATP hydrolysis with the unwinding of duplex DNA by translocating in the 3'-5' direction.. It carries out the reaction ATP + H2O = ADP + phosphate + H(+). Functionally, a helicase with DNA-dependent ATPase activity. Unwinds DNA duplexes with 3'-5' polarity. Translocates on single-stranded DNA with 3'-5' polarity. Initiates unwinding more efficiently from a nicked substrate than double-stranded DNA. Involved in the post-incision events of nucleotide excision repair and methyl-directed mismatch repair, and probably also in repair of alkylated DNA. This is DNA helicase II from Escherichia coli (strain K12).